Reading from the N-terminus, the 211-residue chain is Uracil phosphoribosyltransferase (211 aa).

Residues R77, R102, and 129-137 (DPMLATGGS) each bind 5-phospho-alpha-D-ribose 1-diphosphate. Uracil is bound by residues I192 and 197 to 199 (GDA). 5-phospho-alpha-D-ribose 1-diphosphate is bound at residue D198.

It belongs to the UPRTase family. It depends on Mg(2+) as a cofactor.

The enzyme catalyses UMP + diphosphate = 5-phospho-alpha-D-ribose 1-diphosphate + uracil. It participates in pyrimidine metabolism; UMP biosynthesis via salvage pathway; UMP from uracil: step 1/1. With respect to regulation, allosterically activated by GTP. Catalyzes the conversion of uracil and 5-phospho-alpha-D-ribose 1-diphosphate (PRPP) to UMP and diphosphate. The protein is Uracil phosphoribosyltransferase of Corynebacterium glutamicum (strain R).